A 576-amino-acid polypeptide reads, in one-letter code: Sulfite reductase [NADPH] hemoprotein beta-component (576 aa).

Cys-435, Cys-441, Cys-480, and Cys-484 together coordinate [4Fe-4S] cluster. Position 484 (Cys-484) interacts with siroheme.

This sequence belongs to the nitrite and sulfite reductase 4Fe-4S domain family. Alpha(8)-beta(8). The alpha component is a flavoprotein, the beta component is a hemoprotein. Siroheme serves as cofactor. [4Fe-4S] cluster is required as a cofactor.

The catalysed reaction is hydrogen sulfide + 3 NADP(+) + 3 H2O = sulfite + 3 NADPH + 4 H(+). It functions in the pathway sulfur metabolism; hydrogen sulfide biosynthesis; hydrogen sulfide from sulfite (NADPH route): step 1/1. Component of the sulfite reductase complex that catalyzes the 6-electron reduction of sulfite to sulfide. This is one of several activities required for the biosynthesis of L-cysteine from sulfate. The sequence is that of Sulfite reductase [NADPH] hemoprotein beta-component from Photorhabdus laumondii subsp. laumondii (strain DSM 15139 / CIP 105565 / TT01) (Photorhabdus luminescens subsp. laumondii).